A 333-amino-acid chain; its full sequence is Taste receptor type 2 member 110 (333 aa).

At methionine 1–threonine 13 the chain is on the extracellular side. A helical transmembrane segment spans residues phenylalanine 14–leucine 34. The Cytoplasmic portion of the chain corresponds to valine 35–arginine 60. The helical transmembrane segment at phenylalanine 61–leucine 81 threads the bilayer. Over threonine 82–serine 89 the chain is Extracellular. A helical membrane pass occupies residues isoleucine 90 to valine 110. Topologically, residues phenylalanine 111–lysine 133 are cytoplasmic. Residues valine 134–serine 154 form a helical membrane-spanning segment. Residues methionine 155 to serine 205 lie on the Extracellular side of the membrane. 2 N-linked (GlcNAc...) asparagine glycosylation sites follow: asparagine 186 and asparagine 195. Residues leucine 206–leucine 226 form a helical membrane-spanning segment. Residues tryptophan 227–glycine 255 lie on the Cytoplasmic side of the membrane. A helical membrane pass occupies residues phenylalanine 256–leucine 276. Residues arginine 277 to leucine 283 lie on the Extracellular side of the membrane. The helical transmembrane segment at isoleucine 284–isoleucine 304 threads the bilayer. Over leucine 305–proline 333 the chain is Cytoplasmic.

The protein belongs to the G-protein coupled receptor T2R family.

It localises to the membrane. Functionally, gustducin-coupled receptor implicated in the perception of bitter compounds in the oral cavity and the gastrointestinal tract. Signals through PLCB2 and the calcium-regulated cation channel TRPM5. The chain is Taste receptor type 2 member 110 from Mus musculus (Mouse).